The following is a 260-amino-acid chain: D-threitol dehydrogenase (260 aa).

An NAD(+)-binding site is contributed by 21-50; the sequence is LVTGAASGIGAAIASAYATKGARIAAVDLN. Y166 (proton acceptor) is an active-site residue. K170 is a binding site for NAD(+).

It belongs to the short-chain dehydrogenases/reductases (SDR) family.

The enzyme catalyses D-threitol + NAD(+) = D-erythrulose + NADH + H(+). It participates in carbohydrate metabolism; D-threitol degradation. Its function is as follows. Catalyzes the NAD-dependent reversible oxidation of D-threitol. Involved in the degradation pathway of D-threitol, that allows M.smegmatis to grow on this compound as the sole carbon source. Does not catalyze the oxidation of xylitol, L-sorbitol, and L-sorbose. This Mycolicibacterium smegmatis (strain ATCC 700084 / mc(2)155) (Mycobacterium smegmatis) protein is D-threitol dehydrogenase.